We begin with the raw amino-acid sequence, 703 residues long: Harmonin-binding protein USHBP1 (703 aa).

Residues 1-15 are compositionally biased toward basic residues; sequence MSARATRPRSRRGRH. Disordered stretches follow at residues 1–113 and 138–172; these read MSAR…PPGN and HQPP…CQRE. Residues 189–227 are a coiled coil; that stretch reads SREDELVRTQASLEAIRAEKETLQKEVQELQDSLLRLEP. Positions 228-256 are disordered; that stretch reads CPHLSHNQAGGSGSGSSSSEADREPWETQ. Residues 289–309 adopt a coiled-coil conformation; the sequence is EMHIMEAQMEQLRGSIEKLKC. Residues 396 to 416 are disordered; the sequence is MDAGAQQNPQPSPEGSSVDKP. Over residues 400-410 the composition is skewed to polar residues; it reads AQQNPQPSPEG. A coiled-coil region spans residues 476–513; sequence RLEKTQIQQDLVAAREALADLMLRLQLVRREKRGLELR. The segment at 540 to 583 is disordered; that stretch reads AGGANSSGGHSSGGGSSGDEEEWYQGLPAVPGGTSGIDGGQVGR. Positions 572–581 are enriched in gly residues; sequence GTSGIDGGQV. Positions 596–681 form a coiled coil; it reads ASLTRTLDLQ…QAEEVAVLEA (86 aa).

Belongs to the MCC family. As to quaternary structure, interacts via its C-terminus with the first PDZ domain of USH1C. Highest level of expression in heart, and moderate to low expression in skeletal muscle, kidney, liver, small intestine, placenta and lung.

This Homo sapiens (Human) protein is Harmonin-binding protein USHBP1.